A 548-amino-acid chain; its full sequence is MNIAMTERYKWLLFFLFILLTYFIPLETRLLWQPDEIRYAEISREMLVSGNWSVPYLLDIRYFEKPVLGYWINCIAQWLFGESHFAVRIVVVTSTLLTGWLIYKAAMVVWRNSALAFNAMTVFLSSFLVLAIGTYNILDPIVTLFVTAAMYSFLVALSTPNKKGKIIAYMGIGFFCALGFLTKGFIAVVLPALVFLVMAISQARFKEVVCYSSIALLALAITAGPWVITVALQAPDYWNYFFWVEHVQRFIAKESARSQPTWFYIPIVILGVLPWLGFLFGALKSAFSLKKGTLYFLLWFTLFFAFFSASKGKLLTYMLPCFVPLSILIAHYIEELKDRPDEKISKVNASINIAFGLMGISAVIYSLYSAKFALYDTNETLKIVLAISGFLFWSVIGAGALFRQTQFLTMFCSIGLSLVIGYAIPEKIESRSTPENIIQRYYEPLSNKSYLLTDEVGIGTSLAWGLKRTDIRLTETKGELAYGLNYPDVKNKYYSLEQLLALIEANQYKGVAIVLVRPDRKQILTKLTTLKEKPIVEKEGDLTLVFFN.

12 helical membrane passes run 11-31 (WLLF…TRLL), 89-109 (IVVV…AMVV), 114-134 (ALAF…AIGT), 137-157 (ILDP…LVAL), 180-200 (FLTK…VMAI), 214-234 (IALL…ALQA), 263-283 (FYIP…FGAL), 292-312 (GTLY…ASKG), 314-334 (LLTY…HYIE), 347-367 (VNAS…IYSL), 382-402 (KIVL…GALF), and 405-425 (TQFL…YAIP).

The protein belongs to the glycosyltransferase 83 family.

It localises to the cell inner membrane. It catalyses the reaction 4-amino-4-deoxy-alpha-L-arabinopyranosyl di-trans,octa-cis-undecaprenyl phosphate + lipid IVA = lipid IIA + di-trans,octa-cis-undecaprenyl phosphate.. The protein operates within lipopolysaccharide metabolism; 4-amino-4-deoxy-beta-L-arabinose-lipid A biosynthesis. Catalyzes the transfer of the L-Ara4N moiety of the glycolipid undecaprenyl phosphate-alpha-L-Ara4N to lipid A. The modified arabinose is attached to lipid A and is required for resistance to polymyxin and cationic antimicrobial peptides. This Proteus mirabilis (strain HI4320) protein is Undecaprenyl phosphate-alpha-4-amino-4-deoxy-L-arabinose arabinosyl transferase 1.